The primary structure comprises 235 residues: Probable deoxycytidine kinase FPV151 (235 aa).

Residue 30–38 coordinates ATP; it reads GNISAGKST. 3 residues coordinate substrate: E53, Y68, and Q79. E104 functions as the Proton acceptor in the catalytic mechanism. 3 residues coordinate substrate: R105, D110, and E172.

This sequence belongs to the DCK/DGK family.

It catalyses the reaction 2'-deoxycytidine + a ribonucleoside 5'-triphosphate = dCMP + a ribonucleoside 5'-diphosphate + H(+). This Vertebrata (FPV) protein is Probable deoxycytidine kinase FPV151.